Consider the following 148-residue polypeptide: Nucleoside diphosphate kinase (148 aa).

The ATP site is built by Lys9, Phe57, Arg85, Thr91, Arg102, and Asn112. His115 functions as the Pros-phosphohistidine intermediate in the catalytic mechanism.

Belongs to the NDK family. Homotetramer. Mg(2+) serves as cofactor.

Its subcellular location is the cytoplasm. The catalysed reaction is a 2'-deoxyribonucleoside 5'-diphosphate + ATP = a 2'-deoxyribonucleoside 5'-triphosphate + ADP. It carries out the reaction a ribonucleoside 5'-diphosphate + ATP = a ribonucleoside 5'-triphosphate + ADP. In terms of biological role, major role in the synthesis of nucleoside triphosphates other than ATP. The ATP gamma phosphate is transferred to the NDP beta phosphate via a ping-pong mechanism, using a phosphorylated active-site intermediate. This is Nucleoside diphosphate kinase from Macrococcus caseolyticus (strain JCSC5402) (Macrococcoides caseolyticum).